A 55-amino-acid polypeptide reads, in one-letter code: Large ribosomal subunit protein bL33 (55 aa).

This sequence belongs to the bacterial ribosomal protein bL33 family.

The chain is Large ribosomal subunit protein bL33 from Campylobacter fetus subsp. fetus (strain 82-40).